The sequence spans 397 residues: G2/mitotic-specific cyclin-B1 (397 aa).

It belongs to the cyclin family. Cyclin AB subfamily. In terms of assembly, interacts with the cdc2 protein kinase to form a serine/threonine kinase holoenzyme complex also known as maturation promoting factor (MPF). The cyclin subunit imparts substrate specificity to the complex. When not in a complex with cdc2, interacts with spdya. Interacts with nap1l1. Interacts with nanos1.

It localises to the cytoplasm. The protein localises to the cytoskeleton. Its subcellular location is the microtubule organizing center. It is found in the centrosome. The protein resides in the nucleus. Functionally, essential for the control of the cell cycle at the G2/M (mitosis) transition. The chain is G2/mitotic-specific cyclin-B1 (ccnb1) from Xenopus laevis (African clawed frog).